Here is a 108-residue protein sequence, read N- to C-terminus: DNA-directed RNA polymerase III subunit RPC10 (108 aa).

Zn(2+)-binding residues include cysteine 5, cysteine 8, cysteine 25, cysteine 28, cysteine 69, and cysteine 72. Residues 5–28 form a C4-type zinc finger; sequence CPGCGNGLIVEEGQRCHRFACNTC. Residues 65-107 form a TFIIS-type zinc finger; that stretch reads TAEPCPKCEHPRAYFMQLQTRSADEPMTTFYKCCNAQCGHRWR. A Hairpin motif is present at residues 88-89; sequence DE. Positions 98 and 102 each coordinate Zn(2+).

Belongs to the archaeal RpoM/eukaryotic RPA12/RPB9/RPC11 RNA polymerase family. In terms of assembly, component of the RNA polymerase III complex consisting of 17 subunits: a ten-subunit horseshoe-shaped catalytic core composed of POLR3A/RPC1, POLR3B/RPC2, POLR1C/RPAC1, POLR1D/RPAC2, POLR3K/RPC10, POLR2E/RPABC1, POLR2F/RPABC2, POLR2H/RPABC3, POLR2K/RPABC4 and POLR2L/RPABC5; a mobile stalk composed of two subunits POLR3H/RPC8 and CRCP/RPC9, protruding from the core and functioning primarily in transcription initiation; and additional subunits homologous to general transcription factors of the RNA polymerase II machinery, POLR3C/RPC3-POLR3F/RPC6-POLR3G/RPC7 heterotrimer required for transcription initiation and POLR3D/RPC4-POLR3E/RPC5 heterodimer involved in both transcription initiation and termination.

It is found in the nucleus. Its function is as follows. Core component of RNA polymerase III (Pol III) which synthesizes small non-coding RNAs using the four ribonucleoside triphosphates as substrates. Can mediate Pol I proofreading of the nascent RNA transcript. Anchors into the Pol III active site to constantly monitor transcription fidelity, cleaves mis-incorporated 5'-ribonucleotides and restarts the transcription process. Once Pol III reaches the poly(dT) termination signal, can induce Pol III clamp opening and transcription termination. Pol III plays an important role in sensing and limiting infection by intracellular bacteria and DNA viruses. Acts as a nuclear and cytosolic DNA sensor involved in innate immune response. Can sense non-self dsDNA that serves as template for transcription into dsRNA. The non-self RNA polymerase III transcripts, such as Epstein-Barr virus-encoded RNAs (EBERs) induce type I interferon and NF-kappa-B through the RIG-I pathway. This is DNA-directed RNA polymerase III subunit RPC10 from Mus musculus (Mouse).